A 780-amino-acid polypeptide reads, in one-letter code: WD repeat-containing protein 27 (780 aa).

13 WD repeats span residues 3–56 (TPPE…VWSS), 61–100 (HQLL…MWNV), 111–150 (LTPR…VMDV), 154–193 (SVLV…VWDF), 200–236 (YSSS…IFSL), 291–335 (FPIL…LASF), 342–385 (HFKE…VLEI), 500–540 (NLSR…VFNA), 544–582 (GPPA…VWSV), 588–639 (MLLL…RYKP), 644–685 (KPIF…VFDL), 691–738 (AAVL…LWDL), and 752–779 (AFCT…LSQP).

The protein is WD repeat-containing protein 27 (Wdr27) of Mus musculus (Mouse).